We begin with the raw amino-acid sequence, 876 residues long: Alanine--tRNA ligase (876 aa).

Zn(2+) is bound by residues histidine 565, histidine 569, cysteine 667, and histidine 671.

It belongs to the class-II aminoacyl-tRNA synthetase family. Requires Zn(2+) as cofactor.

It localises to the cytoplasm. It catalyses the reaction tRNA(Ala) + L-alanine + ATP = L-alanyl-tRNA(Ala) + AMP + diphosphate. In terms of biological role, catalyzes the attachment of alanine to tRNA(Ala) in a two-step reaction: alanine is first activated by ATP to form Ala-AMP and then transferred to the acceptor end of tRNA(Ala). Also edits incorrectly charged Ser-tRNA(Ala) and Gly-tRNA(Ala) via its editing domain. In Staphylococcus aureus (strain MSSA476), this protein is Alanine--tRNA ligase.